Reading from the N-terminus, the 372-residue chain is MKFIDEARIEVIAGDGGDGSASMRREKFVPFGGPDGGDGGRGGSVYVIADRNINTLIDYRYAKKHMARNGENGRGSDCYGKGGDDITLRMPVGTVINDMDTGELIADLTEHDQKVLVAKGGAGGLGNLHFKSSTNRAPRQKTDGKPGERRMLKLELKVLADVGLLGMPNAGKSTFISSVSNAKPKIADYPFTTLAPNLGVVRVGPGKSFVIADIPGLIEGAAEGAGLGHQFLRHLQRTGLLLHLVDLAPFDERVDPVAEARAIVGELRKYDESLYEKPRWLVLNKLDMVPEDERRARVADFIERFGWTGPVFEISALTGQGCESLVYAIHDYLVEHSDAHRAELAEDLASDVRFRDAPGAGGEPHERDAGAH.

The Obg domain occupies 1–159; sequence MKFIDEARIE…RMLKLELKVL (159 aa). The tract at residues 128–147 is disordered; sequence LHFKSSTNRAPRQKTDGKPG. One can recognise an OBG-type G domain in the interval 160–334; it reads ADVGLLGMPN…LVYAIHDYLV (175 aa). GTP is bound by residues 166 to 173, 191 to 195, 213 to 216, 284 to 287, and 315 to 317; these read GMPNAGKS, FTTLA, DIPG, NKLD, and SAL. Mg(2+) contacts are provided by serine 173 and threonine 193.

This sequence belongs to the TRAFAC class OBG-HflX-like GTPase superfamily. OBG GTPase family. In terms of assembly, monomer. Mg(2+) serves as cofactor.

Its subcellular location is the cytoplasm. An essential GTPase which binds GTP, GDP and possibly (p)ppGpp with moderate affinity, with high nucleotide exchange rates and a fairly low GTP hydrolysis rate. Plays a role in control of the cell cycle, stress response, ribosome biogenesis and in those bacteria that undergo differentiation, in morphogenesis control. The sequence is that of GTPase Obg from Burkholderia pseudomallei (strain 668).